The following is a 539-amino-acid chain: MSFKSIFLTGGVVSSLGKGLTAASLALLLERQDLKVAMLKLDPYLNVDPGTMNPYEHGEVYVTDDGVETDLDLGHYHRFSSVQLSKYSTATSGQIYTKVLTKERNGEFLGSTVQVIPHVTNEIINVIQSCADHHKPDILIVEIGGTIGDIESLPFLEAVRQFRCEHPQDCLSIHMTYVPYLRAAKEIKTKPTQHSVQNLRSIGISPDVILCRSEAPLSTEVKRKISLFCNVPEHAVFNAIDLERSIYEMPLLLAKENISDFLLNKLGFSPKPLDLSDWQDLVEALCDKERQHVRIGLVGKYLEHEDAYKSVFESLFHASVPANCSLELVPIAPESEDLLEQLSQCDGCLIPGGFGTRSWEGKISAARYCRERNIPCFGICLGMQALVVEYARNVLDKPLANSMEINPETPDPVVCMMEGQDSVVKGGTMRLGAYPCRIAPGSLASAAYKTDLVQERHRHRYEVNPSYIERLEEHGLKIAGVCPLGELCEIVEIPNHRWMLGVQFHPEFLSKLAKPHPLFIEFIRAAKAYSLEKANHEHR.

The segment at 1 to 268 (MSFKSIFLTG…SDFLLNKLGF (268 aa)) is amidoligase domain. S14 is a CTP binding site. Position 14 (S14) interacts with UTP. 15-20 (SLGKGL) serves as a coordination point for ATP. Residue Y55 participates in L-glutamine binding. ATP is bound at residue D72. Mg(2+)-binding residues include D72 and E142. CTP contacts are provided by residues 149 to 151 (DIE), 188 to 193 (KTKPTQ), and K224. Residues 188–193 (KTKPTQ) and K224 contribute to the UTP site. Residues 294 to 532 (RIGLVGKYLE…IRAAKAYSLE (239 aa)) form the Glutamine amidotransferase type-1 domain. G353 provides a ligand contact to L-glutamine. Residue C380 is the Nucleophile; for glutamine hydrolysis of the active site. L-glutamine-binding positions include 381 to 384 (LGMQ), E404, and R460. Catalysis depends on residues H505 and E507.

The protein belongs to the CTP synthase family. Homotetramer.

It catalyses the reaction UTP + L-glutamine + ATP + H2O = CTP + L-glutamate + ADP + phosphate + 2 H(+). The enzyme catalyses L-glutamine + H2O = L-glutamate + NH4(+). It carries out the reaction UTP + NH4(+) + ATP = CTP + ADP + phosphate + 2 H(+). It participates in pyrimidine metabolism; CTP biosynthesis via de novo pathway; CTP from UDP: step 2/2. Allosterically activated by GTP, when glutamine is the substrate; GTP has no effect on the reaction when ammonia is the substrate. The allosteric effector GTP functions by stabilizing the protein conformation that binds the tetrahedral intermediate(s) formed during glutamine hydrolysis. Inhibited by the product CTP, via allosteric rather than competitive inhibition. Catalyzes the ATP-dependent amination of UTP to CTP with either L-glutamine or ammonia as the source of nitrogen. Regulates intracellular CTP levels through interactions with the four ribonucleotide triphosphates. The polypeptide is CTP synthase (Chlamydia trachomatis serovar A (strain ATCC VR-571B / DSM 19440 / HAR-13)).